Here is a 206-residue protein sequence, read N- to C-terminus: HTH-type transcriptional regulator Hpr (206 aa).

Residues alanine 13–glycine 157 enclose the HTH marR-type domain. Residues isoleucine 63–glutamate 86 constitute a DNA-binding region (H-T-H motif). The segment at serine 177 to asparagine 206 is disordered. The segment covering glutamate 178 to asparagine 206 has biased composition (basic and acidic residues).

Homodimer.

In terms of biological role, negative regulator of protease production and sporulation. In Bacillus licheniformis (strain ATCC 14580 / DSM 13 / JCM 2505 / CCUG 7422 / NBRC 12200 / NCIMB 9375 / NCTC 10341 / NRRL NRS-1264 / Gibson 46), this protein is HTH-type transcriptional regulator Hpr.